Reading from the N-terminus, the 1320-residue chain is Transcriptional activator MN1 (1320 aa).

Residue Met-1 is modified to N-acetylmethionine. 9 disordered regions span residues 1–26 (MFGL…FNET), 92–121 (FGGQ…FGGP), 147–219 (PPFA…SLEP), 231–411 (LEYN…EYPI), 423–442 (SEPV…NQRL), 474–615 (NGSM…AGRL), 629–819 (SAWF…KDNL), 840–1150 (GAPN…PDEI), and 1247–1273 (PWEK…SASQ). Residues 98–113 (HHGHPGSHHPHQHHPH) show a composition bias toward basic residues. Composition is skewed to low complexity over residues 202-214 (SFHG…GSDS) and 291-309 (QPPQ…QQQQ). Residues 338–366 (MQPPQQAPPPPQQQPPQQPPQQQPPPPPG) are compositionally biased toward pro residues. Positions 498-514 (FTPPVPDSFPSGPPLQH) are enriched in pro residues. 2 stretches are compositionally biased toward low complexity: residues 523-550 (QQQQ…QQQQ) and 564-578 (RNQQ…LAQL). Gly residues-rich tracts occupy residues 582 to 596 (GDVG…GPVG) and 701 to 710 (QFGGSLGGLG). Residues 759–768 (SGPGVNSPPS) are compositionally biased toward low complexity. Over residues 769-784 (AGGGGGSSGGGGGGGA) the composition is skewed to gly residues. Composition is skewed to low complexity over residues 798–809 (SASKLGALSLGS) and 895–905 (GTSSSGSKASG). A compositionally biased stretch (polar residues) spans 914–930 (DGTSLSPNYTLESTSGN). A phosphoserine mark is found at Ser-950 and Ser-954. Low complexity predominate over residues 973–984 (GVSPGQQQASGA). Ser-1007 carries the phosphoserine modification. Polar residues predominate over residues 1048–1066 (EVSTSYANEDEVSSSSDNP). Ser-1081 is modified (phosphoserine). Over residues 1118–1128 (YGGGGGPGHPG) the composition is skewed to gly residues.

As to quaternary structure, interacts with PBX1, PKNOX1, ZBTB24, E2F7, RING1. In terms of tissue distribution, widely expressed in fetal and adult tissues. Highest expression is observed in fetal brain and skeletal muscle, and adult skeletal muscle.

The protein resides in the nucleus. Functionally, transcriptional activator which specifically regulates expression of TBX22 in the posterior region of the developing palate. Required during later stages of palate development for growth and medial fusion of the palatal shelves. Promotes maturation and normal function of calvarial osteoblasts, including expression of the osteoclastogenic cytokine TNFSF11/RANKL. Necessary for normal development of the membranous bones of the skull. May play a role in tumor suppression. In Homo sapiens (Human), this protein is Transcriptional activator MN1 (MN1).